The sequence spans 626 residues: Chaperone protein DnaK (626 aa).

The residue at position 197 (threonine 197) is a Phosphothreonine; by autocatalysis. A compositionally biased stretch (low complexity) spans 595-614 (QNMAQQQQAQGGAQQQNQNK). The tract at residues 595–626 (QNMAQQQQAQGGAQQQNQNKGGDDDVIDAEVE) is disordered.

The protein belongs to the heat shock protein 70 family.

Acts as a chaperone. This chain is Chaperone protein DnaK, found in Nautilia profundicola (strain ATCC BAA-1463 / DSM 18972 / AmH).